A 62-amino-acid chain; its full sequence is Photosystem II reaction center protein Z (62 aa).

The next 2 membrane-spanning stretches (helical) occupy residues 8 to 28 and 41 to 61; these read ALFA…IVFA and FSGT…NSLI.

This sequence belongs to the PsbZ family. In terms of assembly, PSII is composed of 1 copy each of membrane proteins PsbA, PsbB, PsbC, PsbD, PsbE, PsbF, PsbH, PsbI, PsbJ, PsbK, PsbL, PsbM, PsbT, PsbY, PsbZ, Psb30/Ycf12, at least 3 peripheral proteins of the oxygen-evolving complex and a large number of cofactors. It forms dimeric complexes.

It localises to the plastid. Its subcellular location is the chloroplast thylakoid membrane. Functionally, may control the interaction of photosystem II (PSII) cores with the light-harvesting antenna, regulates electron flow through the 2 photosystem reaction centers. PSII is a light-driven water plastoquinone oxidoreductase, using light energy to abstract electrons from H(2)O, generating a proton gradient subsequently used for ATP formation. This is Photosystem II reaction center protein Z from Drimys granadensis.